Here is a 260-residue protein sequence, read N- to C-terminus: Triosephosphate isomerase (260 aa).

11–13 (NWK) lines the substrate pocket. H103 (electrophile) is an active-site residue. The Proton acceptor role is filled by E175. Substrate is bound by residues G181, S220, and 241 to 242 (GG).

Belongs to the triosephosphate isomerase family. As to quaternary structure, homodimer.

It localises to the cytoplasm. It carries out the reaction D-glyceraldehyde 3-phosphate = dihydroxyacetone phosphate. It participates in carbohydrate biosynthesis; gluconeogenesis. It functions in the pathway carbohydrate degradation; glycolysis; D-glyceraldehyde 3-phosphate from glycerone phosphate: step 1/1. In terms of biological role, involved in the gluconeogenesis. Catalyzes stereospecifically the conversion of dihydroxyacetone phosphate (DHAP) to D-glyceraldehyde-3-phosphate (G3P). This is Triosephosphate isomerase from Shewanella denitrificans (strain OS217 / ATCC BAA-1090 / DSM 15013).